We begin with the raw amino-acid sequence, 309 residues long: Ribosomal RNA small subunit methyltransferase H (309 aa).

Residues 30–32 (GGH), Asp50, Phe74, Asp96, and Gln103 each bind S-adenosyl-L-methionine.

Belongs to the methyltransferase superfamily. RsmH family.

Its subcellular location is the cytoplasm. It catalyses the reaction cytidine(1402) in 16S rRNA + S-adenosyl-L-methionine = N(4)-methylcytidine(1402) in 16S rRNA + S-adenosyl-L-homocysteine + H(+). In terms of biological role, specifically methylates the N4 position of cytidine in position 1402 (C1402) of 16S rRNA. This chain is Ribosomal RNA small subunit methyltransferase H, found in Wigglesworthia glossinidia brevipalpis.